We begin with the raw amino-acid sequence, 488 residues long: Proline--tRNA ligase (488 aa).

This sequence belongs to the class-II aminoacyl-tRNA synthetase family. ProS type 3 subfamily. As to quaternary structure, homodimer.

The protein localises to the cytoplasm. It carries out the reaction tRNA(Pro) + L-proline + ATP = L-prolyl-tRNA(Pro) + AMP + diphosphate. Its function is as follows. Catalyzes the attachment of proline to tRNA(Pro) in a two-step reaction: proline is first activated by ATP to form Pro-AMP and then transferred to the acceptor end of tRNA(Pro). Can inadvertently accommodate and process cysteine. This is Proline--tRNA ligase (proS) from Borreliella burgdorferi (strain ATCC 35210 / DSM 4680 / CIP 102532 / B31) (Borrelia burgdorferi).